The sequence spans 335 residues: Ribosomal RNA large subunit methyltransferase F (335 aa).

It belongs to the methyltransferase superfamily. METTL16/RlmF family.

It localises to the cytoplasm. The catalysed reaction is adenosine(1618) in 23S rRNA + S-adenosyl-L-methionine = N(6)-methyladenosine(1618) in 23S rRNA + S-adenosyl-L-homocysteine + H(+). Its function is as follows. Specifically methylates the adenine in position 1618 of 23S rRNA. The chain is Ribosomal RNA large subunit methyltransferase F from Yersinia enterocolitica serotype O:8 / biotype 1B (strain NCTC 13174 / 8081).